The primary structure comprises 1226 residues: Polyamine-transporting ATPase 13A3 (1226 aa).

Residues 1-28 are Cytoplasmic-facing; that stretch reads MDREERKTINQGQEDEMEIYGYNLSRWK. The stretch at 29-49 is an intramembrane region; it reads LAIVSLGVICSGGFLLLLLYW. At 50 to 205 the chain is on the cytoplasmic side; the sequence is MPEWRVKATC…IAVKVPSVFK (156 aa). Position 98 is a phosphoserine (serine 98). Residues 206 to 226 traverse the membrane as a helical segment; the sequence is LLIKEVLNPFYIFQLFSVILW. Residues 227–232 are Lumenal-facing; the sequence is STDEYY. A helical transmembrane segment spans residues 233 to 253; it reads YYALAIVVMSIVSIVSSLYSI. The Cytoplasmic segment spans residues 254-409; the sequence is RKQYVMLHDM…KPTDFKLYRD (156 aa). A helical transmembrane segment spans residues 410–430; it reads AYLFLLCLVAVAGIGFIYTII. At 431–448 the chain is on the lumenal side; sequence NSILNEVQVGVIIIESLD. The chain crosses the membrane as a helical span at residues 449–469; sequence IITITVPPALPAAMTAGIVYA. The Cytoplasmic portion of the chain corresponds to 470-940; that stretch reads QRRLKKIGIF…ALITSFCVFK (471 aa). Aspartate 498 acts as the 4-aspartylphosphate intermediate in catalysis. Residues aspartate 498 and threonine 500 each contribute to the Mg(2+) site. ATP contacts are provided by residues 498–500, phenylalanine 628, arginine 684, and aspartate 750; that span reads DKT. Position 817 is a phosphoserine (serine 817). Positions 883 and 887 each coordinate Mg(2+). ATP is bound at residue 883–887; it reads DGAND. A helical transmembrane segment spans residues 941 to 961; it reads FMALYSIIQYFSVTLLYSILS. Asparagine 962 is a topological domain (lumenal). Residues 963-983 traverse the membrane as a helical segment; it reads LGDFQFLFIDLAIILVVVFTM. Over 984–999 the chain is Cytoplasmic; the sequence is SLNPAWKELVAQRPPS. A helical transmembrane segment spans residues 1000–1020; the sequence is GLISGALLFSVLSQIIICIGF. Over 1021 to 1073 the chain is Lumenal; it reads QSLGFFWVKQQPWYEVWHPKSDACNTTGSGFWNSSHVDNETELDEHNIQNYEN. The helical transmembrane segment at 1074–1094 threads the bilayer; that stretch reads TTVFFISSFQYLIVAIAFSKG. At 1095-1105 the chain is on the cytoplasmic side; it reads KPFRQPCYKNY. Residues 1106-1126 form a helical membrane-spanning segment; that stretch reads FFVFSVIFLYIFILFIMLYPV. The Lumenal segment spans residues 1127–1143; sequence ASVDQVLQIVCVPYQWR. Residues 1144 to 1164 form a helical membrane-spanning segment; sequence VTMLIIVLVNAFVSITVEESV. The Cytoplasmic segment spans residues 1165–1226; sequence DRWGKCCLPW…NGSCQIITIT (62 aa).

It belongs to the cation transport ATPase (P-type) (TC 3.A.3) family. Type V subfamily. In terms of tissue distribution, broadly expressed.

It is found in the recycling endosome membrane. It localises to the early endosome membrane. The protein localises to the late endosome membrane. It catalyses the reaction putrescine(out) + ATP + H2O = putrescine(in) + ADP + phosphate + H(+). Its function is as follows. ATP-driven pump involved in endocytosis-dependent polyamine transport. Uses ATP as an energy source to transfer polyamine precursor putrescine from the endosomal compartment to the cytosol. The protein is Polyamine-transporting ATPase 13A3 of Homo sapiens (Human).